The chain runs to 349 residues: Phenylalanine--tRNA ligase alpha subunit (349 aa).

Residue Glu-259 coordinates Mg(2+).

This sequence belongs to the class-II aminoacyl-tRNA synthetase family. Phe-tRNA synthetase alpha subunit type 1 subfamily. As to quaternary structure, tetramer of two alpha and two beta subunits. The cofactor is Mg(2+).

Its subcellular location is the cytoplasm. The catalysed reaction is tRNA(Phe) + L-phenylalanine + ATP = L-phenylalanyl-tRNA(Phe) + AMP + diphosphate + H(+). This is Phenylalanine--tRNA ligase alpha subunit from Lactobacillus helveticus (strain DPC 4571).